We begin with the raw amino-acid sequence, 103 residues long: Large ribosomal subunit protein uL24 (103 aa).

The protein belongs to the universal ribosomal protein uL24 family. As to quaternary structure, part of the 50S ribosomal subunit.

One of two assembly initiator proteins, it binds directly to the 5'-end of the 23S rRNA, where it nucleates assembly of the 50S subunit. Functionally, one of the proteins that surrounds the polypeptide exit tunnel on the outside of the subunit. This is Large ribosomal subunit protein uL24 from Haemophilus ducreyi (strain 35000HP / ATCC 700724).